Reading from the N-terminus, the 253-residue chain is tRNA (guanine-N(1)-)-methyltransferase (253 aa).

S-adenosyl-L-methionine contacts are provided by residues glycine 111 and 131–136 (LGDFVL).

The protein belongs to the RNA methyltransferase TrmD family. Homodimer.

Its subcellular location is the cytoplasm. The catalysed reaction is guanosine(37) in tRNA + S-adenosyl-L-methionine = N(1)-methylguanosine(37) in tRNA + S-adenosyl-L-homocysteine + H(+). In terms of biological role, specifically methylates guanosine-37 in various tRNAs. The protein is tRNA (guanine-N(1)-)-methyltransferase of Synechococcus sp. (strain JA-3-3Ab) (Cyanobacteria bacterium Yellowstone A-Prime).